A 910-amino-acid chain; its full sequence is Protein translocase subunit SecA (910 aa).

ATP contacts are provided by residues glutamine 89, 107–111, and aspartate 502; that span reads GEGKT. Residues cysteine 894, cysteine 896, cysteine 905, and histidine 906 each contribute to the Zn(2+) site.

It belongs to the SecA family. In terms of assembly, monomer and homodimer. Part of the essential Sec protein translocation apparatus which comprises SecA, SecYEG and auxiliary proteins SecDF-YajC and YidC. Requires Zn(2+) as cofactor.

It localises to the cell inner membrane. The protein resides in the cytoplasm. It catalyses the reaction ATP + H2O + cellular proteinSide 1 = ADP + phosphate + cellular proteinSide 2.. Its function is as follows. Part of the Sec protein translocase complex. Interacts with the SecYEG preprotein conducting channel. Has a central role in coupling the hydrolysis of ATP to the transfer of proteins into and across the cell membrane, serving both as a receptor for the preprotein-SecB complex and as an ATP-driven molecular motor driving the stepwise translocation of polypeptide chains across the membrane. The chain is Protein translocase subunit SecA from Chelativorans sp. (strain BNC1).